Consider the following 331-residue polypeptide: Cysteine and histidine-rich domain-containing protein 1 (331 aa).

At Ala-2 the chain carries N-acetylalanine. The tract at residues 2–77 (ALLCYNRGCG…KPPEPVKPEV (76 aa)) is interaction with PPP5C. Residues Cys-5, Cys-10, Cys-24, His-27, Cys-42, and Cys-43 each contribute to the Zn(2+) site. 2 CHORD domains span residues 5-64 (CYNR…KGRH) and 157-216 (CKNG…RGKH). Phosphothreonine is present on Thr-47. Phosphoserine is present on Ser-51. Zn(2+) contacts are provided by Cys-59, His-64, Cys-157, Cys-162, Cys-176, His-179, Cys-194, Cys-195, Cys-211, and His-216. The interval 62–82 (GRHNSEKPPEPVKPEVKTTEK) is disordered. A compositionally biased stretch (basic and acidic residues) spans 64-82 (HNSEKPPEPVKPEVKTTEK). The interval 65 to 316 (NSEKPPEPVK…AEPMQWASLE (252 aa)) is interaction with HSP90AA1 and HSP90AB1. The region spanning 227–316 (VVPCRHDWHQ…AEPMQWASLE (90 aa)) is the CS domain.

As to quaternary structure, interacts with HSP90AA1, HSP90AB1, PPP5C, ROCK1 and ROCK2.

Its function is as follows. Regulates centrosome duplication, probably by inhibiting the kinase activity of ROCK2. Proposed to act as co-chaperone for HSP90. May play a role in the regulation of NOD1 via a HSP90 chaperone complex. In vitro, has intrinsic chaperone activity. This function may be achieved by inhibiting association of ROCK2 with NPM1. Plays a role in ensuring the localization of the tyrosine kinase receptor EGFR to the plasma membrane, and thus ensures the subsequent regulation of EGFR activity and EGF-induced actin cytoskeleton remodeling. Involved in stress response. Prevents tumorigenesis. The protein is Cysteine and histidine-rich domain-containing protein 1 (Chordc1) of Rattus norvegicus (Rat).